A 190-amino-acid chain; its full sequence is Large ribosomal subunit protein uL5 (190 aa).

The protein belongs to the universal ribosomal protein uL5 family. As to quaternary structure, part of the 50S ribosomal subunit; contacts the 5S rRNA and probably tRNA. Forms a bridge to the 30S subunit in the 70S ribosome.

Its function is as follows. This is one of the proteins that bind and probably mediate the attachment of the 5S RNA into the large ribosomal subunit, where it forms part of the central protuberance. In the 70S ribosome it contacts protein S13 of the 30S subunit (bridge B1b), connecting the 2 subunits; this bridge is implicated in subunit movement. May contact the P site tRNA; the 5S rRNA and some of its associated proteins might help stabilize positioning of ribosome-bound tRNAs. The chain is Large ribosomal subunit protein uL5 from Methanocaldococcus jannaschii (strain ATCC 43067 / DSM 2661 / JAL-1 / JCM 10045 / NBRC 100440) (Methanococcus jannaschii).